The sequence spans 171 residues: Large ribosomal subunit protein uL10 (171 aa).

Belongs to the universal ribosomal protein uL10 family. In terms of assembly, part of the ribosomal stalk of the 50S ribosomal subunit. The N-terminus interacts with L11 and the large rRNA to form the base of the stalk. The C-terminus forms an elongated spine to which L12 dimers bind in a sequential fashion forming a multimeric L10(L12)X complex.

Forms part of the ribosomal stalk, playing a central role in the interaction of the ribosome with GTP-bound translation factors. This Erythrobacter litoralis (strain HTCC2594) protein is Large ribosomal subunit protein uL10.